Reading from the N-terminus, the 349-residue chain is 5-deoxyribose 1-phosphate isomerase (349 aa).

Residues 49–51 (RGA), R92, and Q199 contribute to the substrate site. D240 (proton donor) is an active-site residue. Substrate is bound at residue 250-251 (NK).

Belongs to the EIF-2B alpha/beta/delta subunits family. DrdI subfamily.

It catalyses the reaction 5-deoxy-alpha-D-ribose 1-phosphate = 5-deoxy-D-ribulose 1-phosphate. It functions in the pathway carbohydrate degradation. Its function is as follows. Catalyzes the isomerization of 5-deoxy-alpha-D-ribose 1-phosphate to 5-deoxy-D-ribulose 1-phosphate, as part of a 5-deoxyribose salvage pathway that recycles this toxic radical SAM enzyme by-product to mainstream metabolites. This Clostridium botulinum (strain Kyoto / Type A2) protein is 5-deoxyribose 1-phosphate isomerase.